The sequence spans 86 residues: Probable oxaloacetate decarboxylase gamma chain 1 (86 aa).

A helical transmembrane segment spans residues 11–33 (AATLMVTGMAVVFLFLTLLVYLV).

The protein belongs to the OadG family. Heterotrimer of an alpha, a beta and a gamma subunit. It depends on Na(+) as a cofactor.

Its subcellular location is the cell membrane. It catalyses the reaction oxaloacetate + 2 Na(+)(in) + H(+) = pyruvate + 2 Na(+)(out) + CO2. Catalyzes the decarboxylation of oxaloacetate coupled to Na(+) translocation. This is Probable oxaloacetate decarboxylase gamma chain 1 (oadG1) from Vibrio cholerae serotype O1 (strain ATCC 39315 / El Tor Inaba N16961).